A 728-amino-acid polypeptide reads, in one-letter code: Ferric reduction oxidase 8, mitochondrial (728 aa).

The transit peptide at 1 to 24 (MAKVLTLLVLRLLMNLLLIGWISL) directs the protein to the mitochondrion. 5 helical membrane passes run 56 to 74 (FAVF…LIYL), 104 to 127 (IGIV…WNFY), 194 to 217 (YHVW…LFIW), 269 to 293 (THHL…YWVL), and 316 to 336 (ILSA…KDPM). Positions 159-281 (FGLLAEACLS…LYIVFLVAFL (123 aa)) constitute a Ferric oxidoreductase domain. Positions 195, 209, 270, and 283 each coordinate heme. Residues 300-418 (GLDKILRIVQ…EGPYGPASVD (119 aa)) form the FAD-binding FR-type domain. FAD is bound at residue 358 to 361 (HPFS). NAD(+) is bound at residue 410 to 413 (GPYG). 2 helical membrane passes run 537–559 (FRWL…IGLS) and 595–616 (DLII…ATIL).

It belongs to the ferric reductase (FRE) family. It depends on FAD as a cofactor. In terms of tissue distribution, expressed in shoots. Detected in roots, pedicels, flowers, siliques and leaf veins.

It is found in the mitochondrion membrane. The catalysed reaction is 2 a Fe(II)-siderophore + NAD(+) + H(+) = 2 a Fe(III)-siderophore + NADH. Ferric chelate reductase probably involved in iron reduction in leaf veins for transport. May participate in the transport of electrons to a Fe(3+) ion via FAD and heme intermediates. This is Ferric reduction oxidase 8, mitochondrial (FRO8) from Arabidopsis thaliana (Mouse-ear cress).